Here is a 200-residue protein sequence, read N- to C-terminus: Transcription elongation factor A protein-like 3 (200 aa).

Positions 1–200 (MEKPYNKNEG…QRGLHDIPYL (200 aa)) are disordered. Over residues 20-36 (DEVEPDDEGKSDEEEKP) the composition is skewed to acidic residues. Ser30 is subject to Phosphoserine. Positions 37 to 50 (DVEGKTECEGKRED) are enriched in basic and acidic residues. Positions 51-64 (EGEPGDEGQLEDEG) are enriched in acidic residues. At Ser65 the chain carries Phosphoserine. Basic and acidic residues-rich tracts occupy residues 65 to 80 (SQEK…KPQG), 96 to 107 (AAEKRPAEDYVP), and 115 to 154 (DRGT…EELR).

The protein belongs to the TFS-II family. TFA subfamily.

The protein localises to the nucleus. In terms of biological role, may be involved in transcriptional regulation. The polypeptide is Transcription elongation factor A protein-like 3 (TCEAL3) (Homo sapiens (Human)).